The chain runs to 577 residues: Probable L-gulonolactone oxidase 4 (577 aa).

The first 17 residues, 1–17, serve as a signal peptide directing secretion; it reads MSFWLSLIFCFFTFASS. Positions 46–228 constitute an FAD-binding PCMH-type domain; that stretch reads SICKAAKVEY…SQVTFELQPM (183 aa).

It belongs to the oxygen-dependent FAD-linked oxidoreductase family. FAD serves as cofactor.

It catalyses the reaction L-gulono-1,4-lactone + O2 = L-ascorbate + H2O2 + H(+). The protein operates within cofactor biosynthesis; L-ascorbate biosynthesis. Its function is as follows. May be involved in the biosynthesis of ascorbic acid. The polypeptide is Probable L-gulonolactone oxidase 4 (Arabidopsis thaliana (Mouse-ear cress)).